Here is a 533-residue protein sequence, read N- to C-terminus: GMP synthase [glutamine-hydrolyzing] (533 aa).

One can recognise a Glutamine amidotransferase type-1 domain in the interval 22–215 (RILILDFGSQ…THNVAGCSGT (194 aa)). The active-site Nucleophile is Cys-99. Catalysis depends on residues His-189 and Glu-191. The GMPS ATP-PPase domain maps to 216-408 (WTMAGFRELE…LGIPESIVGR (193 aa)). Position 243 to 249 (243 to 249 (SGGVDSS)) interacts with ATP.

As to quaternary structure, homodimer.

It catalyses the reaction XMP + L-glutamine + ATP + H2O = GMP + L-glutamate + AMP + diphosphate + 2 H(+). It functions in the pathway purine metabolism; GMP biosynthesis; GMP from XMP (L-Gln route): step 1/1. Functionally, catalyzes the synthesis of GMP from XMP. The polypeptide is GMP synthase [glutamine-hydrolyzing] (Gluconobacter oxydans (strain 621H) (Gluconobacter suboxydans)).